The chain runs to 259 residues: tRNA-cytidine(32) 2-sulfurtransferase (259 aa).

Positions 40–45 (SGGKDS) match the PP-loop motif motif. Cys114, Cys117, and Cys205 together coordinate [4Fe-4S] cluster.

Belongs to the TtcA family. In terms of assembly, homodimer. Mg(2+) serves as cofactor. It depends on [4Fe-4S] cluster as a cofactor.

Its subcellular location is the cytoplasm. It catalyses the reaction cytidine(32) in tRNA + S-sulfanyl-L-cysteinyl-[cysteine desulfurase] + AH2 + ATP = 2-thiocytidine(32) in tRNA + L-cysteinyl-[cysteine desulfurase] + A + AMP + diphosphate + H(+). The protein operates within tRNA modification. Catalyzes the ATP-dependent 2-thiolation of cytidine in position 32 of tRNA, to form 2-thiocytidine (s(2)C32). The sulfur atoms are provided by the cysteine/cysteine desulfurase (IscS) system. This is tRNA-cytidine(32) 2-sulfurtransferase from Bdellovibrio bacteriovorus (strain ATCC 15356 / DSM 50701 / NCIMB 9529 / HD100).